We begin with the raw amino-acid sequence, 744 residues long: Putative pre-mRNA-splicing factor ATP-dependent RNA helicase DHX32 (744 aa).

Position 1 is an N-acetylmethionine (Met-1). Positions 1-28 are disordered; that stretch reads MDEEELDHPNASPEKRYFPESLDSSDGD. The region spanning 72-270 is the Helicase ATP-binding domain; it reads MESLLQNQVV…RLIFEIHRSG (199 aa). 85–92 provides a ligand contact to ATP; that stretch reads GDSKCGKS. A DEAH box motif is present at residues 185–188; the sequence is DDVH. The region spanning 258–438 is the Helicase C-terminal domain; it reads SVIRLIFEIH…SMVLFMKRVD (181 aa).

Belongs to the DEAD box helicase family. DEAH subfamily.

The protein localises to the nucleus. It localises to the mitochondrion. It catalyses the reaction ATP + H2O = ADP + phosphate + H(+). The sequence is that of Putative pre-mRNA-splicing factor ATP-dependent RNA helicase DHX32 (Dhx32) from Mus musculus (Mouse).